A 218-amino-acid chain; its full sequence is CD99 antigen-like protein 2 (218 aa).

The N-terminal stretch at Met1–Gly25 is a signal peptide. Topologically, residues Asp26–Gly136 are extracellular. The tract at residues Leu72–Gly128 is disordered. Composition is skewed to basic and acidic residues over residues Leu76–Arg87 and Tyr110–Gly119. Ser129 carries O-linked (Xyl...) (chondroitin sulfate) serine glycosylation. The helical transmembrane segment at Thr137–Ile157 threads the bilayer. Topologically, residues Ser158–Ile218 are cytoplasmic.

It belongs to the CD99 family. In terms of processing, O-glycosylated.

The protein localises to the cell membrane. The protein resides in the cell junction. It is found in the secreted. In terms of biological role, plays a role in a late step of leukocyte extravasation helping cells to overcome the endothelial basement membrane. Acts at the same site as, but independently of, PECAM1. Homophilic adhesion molecule, but these interactions may not be required for cell aggregation. In Pongo abelii (Sumatran orangutan), this protein is CD99 antigen-like protein 2 (CD99L2).